A 78-amino-acid chain; its full sequence is Defensin-like protein 201 (78 aa).

Positions 1–22 are cleaved as a signal peptide; it reads MRNLINFAVLIMTIFIVSASGA. Intrachain disulfides connect Cys32–Cys78, Cys41–Cys61, Cys46–Cys71, and Cys50–Cys73.

Belongs to the DEFL family.

It localises to the secreted. The sequence is that of Defensin-like protein 201 from Arabidopsis thaliana (Mouse-ear cress).